A 634-amino-acid polypeptide reads, in one-letter code: tRNA uridine 5-carboxymethylaminomethyl modification enzyme MnmG (634 aa).

14–19 (GGGHAG) serves as a coordination point for FAD. 279 to 293 (GPRYCPSIEDKVVRF) contributes to the NAD(+) binding site.

The protein belongs to the MnmG family. Homodimer. Heterotetramer of two MnmE and two MnmG subunits. Requires FAD as cofactor.

The protein localises to the cytoplasm. NAD-binding protein involved in the addition of a carboxymethylaminomethyl (cmnm) group at the wobble position (U34) of certain tRNAs, forming tRNA-cmnm(5)s(2)U34. In Xanthomonas campestris pv. campestris (strain 8004), this protein is tRNA uridine 5-carboxymethylaminomethyl modification enzyme MnmG.